Consider the following 246-residue polypeptide: Complement C1q tumor necrosis factor-related protein 3 (246 aa).

An N-terminal signal peptide occupies residues 1–22; the sequence is MLGRQRIWWHLLPLLFLPFCLC. One can recognise a Collagen-like domain in the interval 51–113; the sequence is GYQGPPGPPG…KGEKGYPGVP (63 aa). The segment at 53-112 is disordered; that stretch reads QGPPGPPGPPGIPGNHGNNGNNGATGHEGAKGEKGDKGDLGPRGERGQHGPKGEKGYPGV. Positions 55 to 64 are enriched in pro residues; it reads PPGPPGPPGI. A compositionally biased stretch (low complexity) spans 65–74; it reads PGNHGNNGNN. Residues 80-107 are compositionally biased toward basic and acidic residues; sequence EGAKGEKGDKGDLGPRGERGQHGPKGEK. A C1q domain is found at 113–246; it reads PPELQIAFMA…FAGFLLFETK (134 aa).

It is found in the secreted. This is Complement C1q tumor necrosis factor-related protein 3 (C1qtnf3) from Mus musculus (Mouse).